Consider the following 173-residue polypeptide: Photosystem I assembly protein Ycf3 (173 aa).

TPR repeat units follow at residues 35-68 (AFVY…EEDT), 72-105 (GYIL…NPRL), and 120-153 (GEKE…APNN).

It belongs to the Ycf3 family.

The protein resides in the cellular thylakoid membrane. Its function is as follows. Essential for the assembly of the photosystem I (PSI) complex. May act as a chaperone-like factor to guide the assembly of the PSI subunits. In Nostoc punctiforme (strain ATCC 29133 / PCC 73102), this protein is Photosystem I assembly protein Ycf3.